A 593-amino-acid chain; its full sequence is Dolichyl-phosphooligosaccharide-protein glycotransferase 2 (593 aa).

At 1 to 12 (MTPVGMDRKSLS) the chain is on the cytoplasmic side. Residues 13 to 33 (LLILIVLLGLCIRLQNFGEIF) form a helical membrane-spanning segment. Over 34–98 (DSRIYYYGYD…GLFLGFWASE (65 aa)) the chain is Extracellular. The DXD motif 1 signature appears at 41 to 43 (GYD). Asp43 is a Mn(2+) binding site. Residues 99–119 (IFAVVFPVIIGVLCIVLVYLI) form a helical membrane-spanning segment. The Cytoplasmic segment spans residues 120 to 128 (SLEVLRNEK). Residues 129–149 (FALISAFIFSVCPVTVWKSLL) traverse the membrane as a helical segment. At 150 to 154 (GKADH) the chain is on the extracellular side. Asp153 provides a ligand contact to Mn(2+). Residues 153–155 (DHH) carry the DXD motif 2 motif. His154 contributes to the a glycophospholipid binding site. His155 lines the Mn(2+) pocket. The helical transmembrane segment at 155–175 (HIWVVFLLLLSIWLVTKPGLL) threads the bilayer. Residues 176-180 (KLLSG) are Cytoplasmic-facing. The helical transmembrane segment at 181–201 (IPMLLMALSWLGAPIYAALLA) threads the bilayer. The Extracellular portion of the chain corresponds to 202 to 229 (VSSLFQFNEKEVRIVGISNLIPVLSSIQ). Residues 230 to 250 (NLFLGFSFLAIAVFLLVGSFV) form a helical membrane-spanning segment. Topologically, residues 251 to 265 (KRFERRFRYAIVYYL) are cytoplasmic. Residues 266–286 (CICSVALLSAYLMPVGWLGFV) traverse the membrane as a helical segment. The Extracellular portion of the chain corresponds to 287-310 (KSGISYVLGTDIYLPTIREARSFQ). Residues 302–305 (TIRE) carry the TIXE motif motif. The helical transmembrane segment at 311–331 (ILGVISSAGYLFFVLAIPALF) threads the bilayer. Residue Met332 is a topological domain, cytoplasmic. Residues 333 to 353 (LRNGFLKVFFVLSFLISILQL) form a helical membrane-spanning segment. Residue Arg354 is a topological domain, extracellular. An a glycophospholipid-binding site is contributed by Arg354. The helical transmembrane segment at 355–375 (FVEVLAFPVAILASYTICQIL) threads the bilayer. The Cytoplasmic portion of the chain corresponds to 376-411 (ERVDYPVFRKEEEGESKRRGRKEKKKAVEIRKKDHA). A helical transmembrane segment spans residues 412–432 (TVIAFLLFLALPCFANSLAPV). At 433–593 (EMTMDWKEAL…FGTVKIFEVK (161 aa)) the chain is on the extracellular side. Positions 468–470 (WWD) are interacts with target acceptor peptide in protein substrate. Positions 468-472 (WWDYG) match the WWDYG motif motif. Positions 524 to 539 (ELTVKPETNKTKFIPI) match the DKi motif motif.

It belongs to the STT3 family. The cofactor is Mn(2+). It depends on Mg(2+) as a cofactor. Zn(2+) serves as cofactor.

Its subcellular location is the cell membrane. It carries out the reaction an archaeal dolichyl phosphooligosaccharide + [protein]-L-asparagine = an archaeal dolichyl phosphate + a glycoprotein with the oligosaccharide chain attached by N-beta-D-glycosyl linkage to a protein L-asparagine.. It participates in protein modification; protein glycosylation. Its function is as follows. Oligosaccharyl transferase (OST) that catalyzes the initial transfer of a defined glycan (a GalNAc-linked heptasaccharide composed of 4 Hex, 3 dHex and a sulfate for A.fulgidus AglB-S) from the lipid carrier dolichol-monophosphate to an asparagine residue within an Asn-X-Ser/Thr consensus motif in nascent polypeptide chains, the first step in protein N-glycosylation. The protein is Dolichyl-phosphooligosaccharide-protein glycotransferase 2 (aglB2) of Archaeoglobus fulgidus (strain ATCC 49558 / DSM 4304 / JCM 9628 / NBRC 100126 / VC-16).